We begin with the raw amino-acid sequence, 722 residues long: uncharacterized protein (722 aa).

Residues serine 575, aspartate 658, and histidine 691 each act as charge relay system in the active site.

This sequence belongs to the peptidase S9B family.

This is an uncharacterized protein from Rickettsia prowazekii (strain Madrid E).